A 105-amino-acid chain; its full sequence is MNFQKLLKEAQKAQKKAAEVQERLERMTVVGSAQGLVEVEANGHGKILALRLKPEALKAFQDDPEGLEDLLLVAIQDAQTKAHELSEKEMAKELGGVGQMLGKLF.

It belongs to the YbaB/EbfC family. In terms of assembly, homodimer.

Its subcellular location is the cytoplasm. It is found in the nucleoid. Its function is as follows. Binds to DNA and alters its conformation. May be involved in regulation of gene expression, nucleoid organization and DNA protection. This Thermus thermophilus (strain ATCC 27634 / DSM 579 / HB8) protein is Nucleoid-associated protein TTHA1599.